Reading from the N-terminus, the 571-residue chain is MTLLSSLGRASRSAPLASKLLLLGTLSGGSIVAYADANEEANKKEEHKKKKVVVLGTGWAGISFLKDLDITSYDVQVVSPQNYFAFTPLLPSVTCGTVEARSIVESVRNITKKKNGEIELWEADCFKIDHVNQKVHCRPVFKDDPEASQEFSLGYDYLIVAVGAQVNTFGTPGVLENCHFLKEVEDAQRIRRGVIDCFEKAILPGLTEEQRRRKLHFVIVGGGPTGVEFAAELHDFIIEDITKIYPSVKELVKITLIQSGDHILNTFDERISSFAEQKFTRDGIDVQTGMRVMSVTDKDITVKVKSSGELVSIPHGLILWSTGVGTRPVISDFMEQVGQGGRRAVATNEWLQVTGCENVYAVGDCASIAQRKILGDIANIFKAADADNSGTLTMEELEGVVDDIIVRYPQVELYLKSKHMRHINDLLADSEGNARKEVDIEAFKLALSEADSQMKTLPATAQVAAQQGAYLAKCFNRMEQCKELPEGPKRFRTGGHHQFRPFQYKHFGQFAPLGGDQAAAELPGDWVSAGKSAQWLWYSVYASKQVSWRTRALVVSDWTRRYIFGRDSSRI.

The N-terminal 35 residues, 1–35 (MTLLSSLGRASRSAPLASKLLLLGTLSGGSIVAYA), are a transit peptide targeting the mitochondrion. An FAD-binding site is contributed by 51–81 (KVVVLGTGWAGISFLKDLDITSYDVQVVSPQ). Residue 215–251 (LHFVIVGGGPTGVEFAAELHDFIIEDITKIYPSVKEL) participates in NAD(+) binding. The EF-hand domain occupies 372 to 407 (KILGDIANIFKAADADNSGTLTMEELEGVVDDIIVR). Positions 385, 387, 389, 391, and 396 each coordinate Ca(2+). The Microbody targeting signal signature appears at 562-571 (YIFGRDSSRI).

It belongs to the NADH dehydrogenase family. It depends on FAD as a cofactor. As to expression, expressed in seedlings, roots, cotyledons, leaves, stems, buds and flowers.

The protein resides in the mitochondrion inner membrane. It is found in the peroxisome. The enzyme catalyses a quinone + NADH + H(+) = a quinol + NAD(+). The catalysed reaction is a ubiquinone + NADH + H(+) = a ubiquinol + NAD(+). Its activity is regulated as follows. Activity is calcium-dependent with a more pronounced effect at higher pH. Alternative NADH-ubiquinone oxidoreductase which catalyzes the oxidation of mitochondrial NADH does not translocate protons across the inner mitochondrial membrane. Calcium-dependent NAD(P)H dehydrogenase. Binds calcium ions. This Arabidopsis thaliana (Mouse-ear cress) protein is External alternative NAD(P)H-ubiquinone oxidoreductase B1, mitochondrial (NDB1).